A 92-amino-acid polypeptide reads, in one-letter code: Small ribosomal subunit protein uS19 (92 aa).

This sequence belongs to the universal ribosomal protein uS19 family.

Protein S19 forms a complex with S13 that binds strongly to the 16S ribosomal RNA. This chain is Small ribosomal subunit protein uS19, found in Baumannia cicadellinicola subsp. Homalodisca coagulata.